Reading from the N-terminus, the 326-residue chain is Vitamin B12 import system permease protein BtuC (326 aa).

A run of 9 helical transmembrane segments spans residues 15–35 (WLLS…CAGE), 61–81 (LAVL…QALF), 88–108 (PGLL…VLLG), 112–132 (LPGW…TLIL), 146–166 (LLAG…AIYF), 184–204 (GGVD…LIWI), 240–260 (GWMV…GLVI), 274–294 (VLLP…DVVA), and 302–322 (ELPI…WLLL).

Belongs to the binding-protein-dependent transport system permease family. FecCD subfamily. In terms of assembly, the complex is composed of two ATP-binding proteins (BtuD), two transmembrane proteins (BtuC) and a solute-binding protein (BtuF).

The protein localises to the cell inner membrane. Part of the ABC transporter complex BtuCDF involved in vitamin B12 import. Involved in the translocation of the substrate across the membrane. The protein is Vitamin B12 import system permease protein BtuC of Salmonella enteritidis PT4 (strain P125109).